The sequence spans 56 residues: MAKKGIREKIRLVSTANTGHFYTTDKNKRNMPGKFEIKKFDPVVRQHVVYKEAKIK.

It belongs to the bacterial ribosomal protein bL33 family.

This chain is Large ribosomal subunit protein bL33, found in Vibrio vulnificus (strain YJ016).